Consider the following 353-residue polypeptide: Methylthioribose-1-phosphate isomerase (353 aa).

Residues 51-53 (RGA), Arg94, and Gln199 each bind substrate. The active-site Proton donor is the Asp240. 250–251 (NK) is a binding site for substrate.

This sequence belongs to the EIF-2B alpha/beta/delta subunits family. MtnA subfamily. Homodimer.

The enzyme catalyses 5-(methylsulfanyl)-alpha-D-ribose 1-phosphate = 5-(methylsulfanyl)-D-ribulose 1-phosphate. The protein operates within amino-acid biosynthesis; L-methionine biosynthesis via salvage pathway; L-methionine from S-methyl-5-thio-alpha-D-ribose 1-phosphate: step 1/6. Functionally, catalyzes the interconversion of methylthioribose-1-phosphate (MTR-1-P) into methylthioribulose-1-phosphate (MTRu-1-P). In Bacillus cereus (strain ATCC 14579 / DSM 31 / CCUG 7414 / JCM 2152 / NBRC 15305 / NCIMB 9373 / NCTC 2599 / NRRL B-3711), this protein is Methylthioribose-1-phosphate isomerase.